The chain runs to 542 residues: Glucans biosynthesis protein G (542 aa).

The N-terminal stretch at 1–34 (MVSLLRCPSSKPYSSLICSLTLGAVVALSGVAYA) is a signal peptide.

Belongs to the OpgD/OpgG family.

Its subcellular location is the periplasm. It functions in the pathway glycan metabolism; osmoregulated periplasmic glucan (OPG) biosynthesis. Its function is as follows. Involved in the biosynthesis of osmoregulated periplasmic glucans (OPGs). The polypeptide is Glucans biosynthesis protein G (Shewanella baltica (strain OS223)).